The primary structure comprises 448 residues: MAHVGDCTQTPWLPVLVVSLMCSARAEYSNCGENEYYNQTTGLCQECPPCGPGEEPYLSCGYGTKDEDYGCVPCPAEKFSKGGYQICRRHKDCEGFFRATVLTPGDMENDAECGPCLPGYYMLENRPRNIYGMVCYSCLLAPPNTKECVGATSGASANFPGTSGSSTLSPFQHAHKELSGQGHLATALIIAMSTIFIMAIAIVLIIMFYILKTKPSAPACCTSHPGKSVEAQVSKDEEKKEAPDNVVMFSEKDEFEKLTATPAKPTKSENDASSENEQLLSRSVDSDEEPAPDKQGSPELCLLSLVHLAREKSATSNKSAGIQSRRKKILDVYANVCGVVEGLSPTELPFDCLEKTSRMLSSTYNSEKAVVKTWRHLAESFGLKRDEIGGMTDGMQLFDRISTAGYSIPELLTKLVQIERLDAVESLCADILEWAGVVPPASQPHAAS.

The first 26 residues, 1–26, serve as a signal peptide directing secretion; sequence MAHVGDCTQTPWLPVLVVSLMCSARA. The Extracellular portion of the chain corresponds to 27–187; sequence EYSNCGENEY…LSGQGHLATA (161 aa). TNFR-Cys repeat units lie at residues 30–71, 73–113, and 115–148; these read NCGE…DYGC, PCPA…DAEC, and PCLP…TKEC. Disulfide bonds link cysteine 31/cysteine 44, cysteine 47/cysteine 60, cysteine 50/cysteine 71, cysteine 74/cysteine 87, cysteine 93/cysteine 113, and cysteine 135/cysteine 148. An N-linked (GlcNAc...) asparagine glycan is attached at asparagine 38. The helical transmembrane segment at 188–208 threads the bilayer; it reads LIIAMSTIFIMAIAIVLIIMF. At 209–448 the chain is on the cytoplasmic side; sequence YILKTKPSAP…PPASQPHAAS (240 aa). The interval 220-297 is disordered; sequence CCTSHPGKSV…EEPAPDKQGS (78 aa). Basic and acidic residues predominate over residues 233–243; that stretch reads VSKDEEKKEAP. Positions 271 to 283 are enriched in polar residues; it reads DASSENEQLLSRS. The Death domain maps to 358 to 431; the sequence is RMLSSTYNSE…DAVESLCADI (74 aa).

In terms of assembly, binds to EDARADD. Associates with TRAF1, TRAF2, TRAF3 and NIK. In terms of tissue distribution, detected in fetal kidney, lung, skin and cultured neonatal epidermal keratinocytes. Not detected in lymphoblast and fibroblast cell lines.

The protein resides in the membrane. Functionally, receptor for EDA isoform A1, but not for EDA isoform A2. Mediates the activation of NF-kappa-B and JNK. May promote caspase-independent cell death. The polypeptide is Tumor necrosis factor receptor superfamily member EDAR (EDAR) (Homo sapiens (Human)).